A 561-amino-acid polypeptide reads, in one-letter code: uncharacterized protein (561 aa).

Residues 187-217 (DDEELSEEEILNRIDKLQIELEQVIGKQKNI) are a coiled coil.

This is an uncharacterized protein from Dictyostelium discoideum (Social amoeba).